Here is a 395-residue protein sequence, read N- to C-terminus: Elongation factor Tu (395 aa).

The tr-type G domain occupies 10–205 (KPHVNIGTIG…CDTWIPLPPR (196 aa)). The G1 stretch occupies residues 19 to 26 (GHVDHGKT). 19–26 (GHVDHGKT) contacts GTP. A Mg(2+)-binding site is contributed by T26. The tract at residues 60-64 (GITIN) is G2. A G3 region spans residues 81–84 (DCPG). GTP contacts are provided by residues 81–85 (DCPGH) and 136–139 (NKCD). The tract at residues 136-139 (NKCD) is G4. The G5 stretch occupies residues 174-176 (SAL).

This sequence belongs to the TRAFAC class translation factor GTPase superfamily. Classic translation factor GTPase family. EF-Tu/EF-1A subfamily. In terms of assembly, monomer.

It is found in the cytoplasm. The catalysed reaction is GTP + H2O = GDP + phosphate + H(+). Functionally, GTP hydrolase that promotes the GTP-dependent binding of aminoacyl-tRNA to the A-site of ribosomes during protein biosynthesis. This chain is Elongation factor Tu, found in Parabacteroides distasonis (strain ATCC 8503 / DSM 20701 / CIP 104284 / JCM 5825 / NCTC 11152).